The sequence spans 329 residues: Ribonucleoside-diphosphate reductase subunit beta (329 aa).

Fe cation-binding residues include Asp-66, Glu-97, and His-101. Tyr-105 is a catalytic residue. 3 residues coordinate Fe cation: Glu-164, Glu-198, and His-201.

It belongs to the ribonucleoside diphosphate reductase small chain family. In terms of assembly, tetramer of two alpha and two beta subunits. Requires Fe cation as cofactor.

It carries out the reaction a 2'-deoxyribonucleoside 5'-diphosphate + [thioredoxin]-disulfide + H2O = a ribonucleoside 5'-diphosphate + [thioredoxin]-dithiol. Its function is as follows. Provides the precursors necessary for DNA synthesis. Catalyzes the biosynthesis of deoxyribonucleotides from the corresponding ribonucleotides. In Bacillus pumilus (Bacillus mesentericus), this protein is Ribonucleoside-diphosphate reductase subunit beta (bnrdF).